We begin with the raw amino-acid sequence, 53 residues long: Small ribosomal subunit protein uS14m (53 aa).

It belongs to the universal ribosomal protein uS14 family.

It is found in the mitochondrion. The protein is Small ribosomal subunit protein uS14m (RPS14) of Bigelowiella natans (Pedinomonas minutissima).